The primary structure comprises 95 residues: Aspartyl/glutamyl-tRNA(Asn/Gln) amidotransferase subunit C (95 aa).

It belongs to the GatC family. Heterotrimer of A, B and C subunits.

The enzyme catalyses L-glutamyl-tRNA(Gln) + L-glutamine + ATP + H2O = L-glutaminyl-tRNA(Gln) + L-glutamate + ADP + phosphate + H(+). It catalyses the reaction L-aspartyl-tRNA(Asn) + L-glutamine + ATP + H2O = L-asparaginyl-tRNA(Asn) + L-glutamate + ADP + phosphate + 2 H(+). Allows the formation of correctly charged Asn-tRNA(Asn) or Gln-tRNA(Gln) through the transamidation of misacylated Asp-tRNA(Asn) or Glu-tRNA(Gln) in organisms which lack either or both of asparaginyl-tRNA or glutaminyl-tRNA synthetases. The reaction takes place in the presence of glutamine and ATP through an activated phospho-Asp-tRNA(Asn) or phospho-Glu-tRNA(Gln). This Dehalococcoides mccartyi (strain CBDB1) protein is Aspartyl/glutamyl-tRNA(Asn/Gln) amidotransferase subunit C.